A 517-amino-acid polypeptide reads, in one-letter code: Methylmalonyl-CoA decarboxylase subunit alpha (517 aa).

Residues 4 to 260 form the CoA carboxyltransferase N-terminal domain; the sequence is AAKKIQDLQK…NNMEKAPEFG (257 aa). The 243-residue stretch at 271–513 folds into the CoA carboxyltransferase C-terminal domain; it reads ELDALMPDNP…REKLPAKKHG (243 aa).

It belongs to the AccD/PCCB family. As to quaternary structure, the methylmalonyl-CoA decarboxylase is composed of four subunits: the carboxyltransferase alpha subunit (MmdA), the tunnel beta subunit (MmdB), the biotin-containing gamma subunit (MmdC) and the delta subunit (MmdD).

The protein localises to the cell membrane. It catalyses the reaction (S)-methylmalonyl-CoA + Na(+)(in) + H(+)(out) = propanoyl-CoA + Na(+)(out) + CO2. In terms of biological role, carboxyltransferase subunit of the sodium ion pump methylmalonyl-CoA decarboxylase, which converts the chemical energy of a decarboxylation reaction into an electrochemical gradient of Na(+) ions across the cytoplasmic membrane, thereby creating a sodium ion motive force that is used for ATP synthesis. The alpha subunit catalyzes the Na(+)-independent carboxyltransfer from methylmalonyl-CoA to the prosthetic biotin group located on the gamma subunit. The polypeptide is Methylmalonyl-CoA decarboxylase subunit alpha (Propionigenium modestum).